Here is a 524-residue protein sequence, read N- to C-terminus: Alkaline phosphatase, tissue-nonspecific isozyme (524 aa).

Residues 1–17 form the signal peptide; that stretch reads MISPFLVLAIGTCLTNS. Asp-60 contributes to the Mg(2+) binding site. Residues Asp-60 and Ser-110 each coordinate Zn(2+). The active-site Phosphoserine intermediate is the Ser-110. Ser-110 is modified (phosphoserine). Cysteines 139 and 201 form a disulfide. Residue Asn-140 is glycosylated (N-linked (GlcNAc...) asparagine). Thr-173 contributes to the Mg(2+) binding site. An N-linked (GlcNAc...) asparagine glycan is attached at Asn-230. Glu-235 serves as a coordination point for Ca(2+). Asn-271 is a glycosylation site (N-linked (GlcNAc...) asparagine). The Ca(2+) site is built by Phe-290 and Glu-291. Asn-302 carries N-linked (GlcNAc...) asparagine glycosylation. Asp-306 contributes to the Ca(2+) binding site. Glu-332 serves as a coordination point for Mg(2+). The Zn(2+) site is built by Asp-337, His-341, Asp-378, and His-379. N-linked (GlcNAc...) asparagine glycosylation is present at Asn-430. His-454 contacts Zn(2+). A disulfide bridge links Cys-489 with Cys-497. Residue Ser-499 is the site of GPI-anchor amidated serine attachment. A propeptide spans 500-524 (removed in mature form); sequence ASSAGGPSPGPLFLLLALPSLGILF.

It belongs to the alkaline phosphatase family. Homodimer. Mg(2+) is required as a cofactor. It depends on Zn(2+) as a cofactor. The cofactor is Ca(2+). N-glycosylated.

It localises to the cell membrane. It is found in the extracellular vesicle membrane. The protein resides in the mitochondrion membrane. Its subcellular location is the mitochondrion intermembrane space. The enzyme catalyses a phosphate monoester + H2O = an alcohol + phosphate. It catalyses the reaction diphosphate + H2O = 2 phosphate + H(+). It carries out the reaction pyridoxal 5'-phosphate + H2O = pyridoxal + phosphate. The catalysed reaction is phosphoethanolamine + H2O = ethanolamine + phosphate. The enzyme catalyses N-phosphocreatine + H2O = creatine + phosphate. It catalyses the reaction ATP + H2O = ADP + phosphate + H(+). It carries out the reaction ADP + H2O = AMP + phosphate + H(+). The catalysed reaction is AMP + H2O = adenosine + phosphate. Its activity is regulated as follows. Phosphatase activity is specifically inhibited by 5-((5-chloro-2-methoxyphenyl)sulfonamido)nicotinamide (SBI-425). Functionally, alkaline phosphatase that metabolizes various phosphate compounds and plays a key role in skeletal mineralization and adaptive thermogenesis. Has broad substrate specificity and can hydrolyze a considerable variety of compounds: however, only a few substrates, such as diphosphate (inorganic pyrophosphate; PPi), pyridoxal 5'-phosphate (PLP) and N-phosphocreatine are natural substrates. Plays an essential role in skeletal and dental mineralization via its ability to hydrolyze extracellular diphosphate, a potent mineralization inhibitor, to phosphate: it thereby promotes hydroxyapatite crystal formation and increases inorganic phosphate concentration. Acts in a non-redundant manner with PHOSPHO1 in skeletal mineralization: while PHOSPHO1 mediates the initiation of hydroxyapatite crystallization in the matrix vesicles (MVs), ALPL/TNAP catalyzes the spread of hydroxyapatite crystallization in the extracellular matrix. Also promotes dephosphorylation of osteopontin (SSP1), an inhibitor of hydroxyapatite crystallization in its phosphorylated state; it is however unclear whether ALPL/TNAP mediates SSP1 dephosphorylation via a direct or indirect manner. Catalyzes dephosphorylation of PLP to pyridoxal (PL), the transportable form of vitamin B6, in order to provide a sufficient amount of PLP in the brain, an essential cofactor for enzymes catalyzing the synthesis of diverse neurotransmitters. Additionally, also able to mediate ATP degradation in a stepwise manner to adenosine, thereby regulating the availability of ligands for purinergic receptors. Also capable of dephosphorylating microbial products, such as lipopolysaccharides (LPS) as well as other phosphorylated small-molecules, such as poly-inosine:cytosine (poly I:C). Acts as a key regulator of adaptive thermogenesis as part of the futile creatine cycle: localizes to the mitochondria of thermogenic fat cells and acts by mediating hydrolysis of N-phosphocreatine to initiate a futile cycle of creatine dephosphorylation and phosphorylation. During the futile creatine cycle, creatine and N-phosphocreatine are in a futile cycle, which dissipates the high energy charge of N-phosphocreatine as heat without performing any mechanical or chemical work. This chain is Alkaline phosphatase, tissue-nonspecific isozyme (ALPL), found in Felis catus (Cat).